A 499-amino-acid chain; its full sequence is Probable cytosol aminopeptidase (499 aa).

Residues lysine 263 and aspartate 268 each contribute to the Mn(2+) site. The active site involves lysine 275. Mn(2+) is bound by residues aspartate 286, aspartate 345, and glutamate 347. Arginine 349 is an active-site residue.

It belongs to the peptidase M17 family. It depends on Mn(2+) as a cofactor.

The protein resides in the cytoplasm. It catalyses the reaction Release of an N-terminal amino acid, Xaa-|-Yaa-, in which Xaa is preferably Leu, but may be other amino acids including Pro although not Arg or Lys, and Yaa may be Pro. Amino acid amides and methyl esters are also readily hydrolyzed, but rates on arylamides are exceedingly low.. The enzyme catalyses Release of an N-terminal amino acid, preferentially leucine, but not glutamic or aspartic acids.. Its function is as follows. Presumably involved in the processing and regular turnover of intracellular proteins. Catalyzes the removal of unsubstituted N-terminal amino acids from various peptides. This is Probable cytosol aminopeptidase from Bradyrhizobium sp. (strain BTAi1 / ATCC BAA-1182).